A 629-amino-acid chain; its full sequence is tRNA uridine 5-carboxymethylaminomethyl modification enzyme MnmG (629 aa).

FAD is bound by residues 13–18 (GGGHAG), V125, and S180. 273-287 (GPRYCPSIEDKVMRF) serves as a coordination point for NAD(+). Residue Q370 coordinates FAD.

The protein belongs to the MnmG family. As to quaternary structure, homodimer. Heterotetramer of two MnmE and two MnmG subunits. Requires FAD as cofactor.

It localises to the cytoplasm. Functionally, NAD-binding protein involved in the addition of a carboxymethylaminomethyl (cmnm) group at the wobble position (U34) of certain tRNAs, forming tRNA-cmnm(5)s(2)U34. The chain is tRNA uridine 5-carboxymethylaminomethyl modification enzyme MnmG from Salmonella paratyphi A (strain ATCC 9150 / SARB42).